A 118-amino-acid chain; its full sequence is Holo-[acyl-carrier-protein] synthase (118 aa).

Residues Asp-8 and Glu-58 each coordinate Mg(2+).

It belongs to the P-Pant transferase superfamily. AcpS family. Mg(2+) is required as a cofactor.

It localises to the cytoplasm. The enzyme catalyses apo-[ACP] + CoA = holo-[ACP] + adenosine 3',5'-bisphosphate + H(+). Transfers the 4'-phosphopantetheine moiety from coenzyme A to a Ser of acyl-carrier-protein. This is Holo-[acyl-carrier-protein] synthase from Listeria monocytogenes serotype 4a (strain HCC23).